The chain runs to 377 residues: Chaperone protein DnaJ (377 aa).

The J domain maps to 5 to 70; sequence DYYEILGVSK…EKRSAYDQYG (66 aa). The CR-type zinc-finger motif lies at 131–209; that stretch reads GVVREICVPT…CRGSGRIERT (79 aa). Residues cysteine 144, cysteine 147, cysteine 161, cysteine 164, cysteine 183, cysteine 186, cysteine 197, and cysteine 200 each coordinate Zn(2+). 4 CXXCXGXG motif repeats span residues 144-151, 161-168, 183-190, and 197-204; these read CLQCRGSG, CVTCHGHG, CPSCNGHG, and CNKCRGSG.

It belongs to the DnaJ family. As to quaternary structure, homodimer. Requires Zn(2+) as cofactor.

It localises to the cytoplasm. Participates actively in the response to hyperosmotic and heat shock by preventing the aggregation of stress-denatured proteins and by disaggregating proteins, also in an autonomous, DnaK-independent fashion. Unfolded proteins bind initially to DnaJ; upon interaction with the DnaJ-bound protein, DnaK hydrolyzes its bound ATP, resulting in the formation of a stable complex. GrpE releases ADP from DnaK; ATP binding to DnaK triggers the release of the substrate protein, thus completing the reaction cycle. Several rounds of ATP-dependent interactions between DnaJ, DnaK and GrpE are required for fully efficient folding. Also involved, together with DnaK and GrpE, in the DNA replication of plasmids through activation of initiation proteins. This Blochmanniella floridana protein is Chaperone protein DnaJ.